The sequence spans 866 residues: Protein mono-ADP-ribosyltransferase PARP9 (866 aa).

Position 42 is a phosphoserine (Ser42). Macro domains follow at residues Gln109 to Leu298 and Ala313 to Ser492. The 219-residue stretch at Thr635–Ser853 folds into the PARP catalytic domain.

The protein belongs to the ARTD/PARP family. In terms of assembly, forms a stable complex with E3 ligase DTX3L; the interaction is required for PARP9 mediated ADP-ribosylation of ubiquitin. Interacts (via PARP catalytic domain) with DTX3L (via N-terminus). Forms a complex with STAT1 and DTX3L independently of IFNB1 or IFNG-mediated STAT1 'Tyr-701' phosphorylation. Forms a complex with STAT1, DTX3L and histone H2B H2BC9/H2BJ; the interaction is likely to induce H2BC9/H2BJ ubiquitination. Interacts (via N-terminus) with STAT1. Interacts with PARP14 in IFNG-stimulated macrophages; the interaction prevents PARP14-mediated STAT1 and STAT6 ADP-riboslylation. Interacts with PARP1 (when poly-ADP-ribosylated). ADP-ribosylated by PARP14. In terms of tissue distribution, highly expressed in the thymus and intestine. Expressed in macrophages.

It localises to the cytoplasm. Its subcellular location is the cytosol. The protein resides in the nucleus. It catalyses the reaction [protein]-C-terminal glycine + NAD(+) = [protein]-C-terminal O-(ADP-D-ribosyl)-glycine + nicotinamide. With respect to regulation, binding to poly(ADP-ribose) does not affect its activity. In terms of biological role, ADP-ribosyltransferase which, in association with E3 ligase DTX3L, plays a role in DNA damage repair and in immune responses including interferon-mediated antiviral defenses. Within the complex, enhances DTX3L E3 ligase activity which is further enhanced by PARP9 binding to poly(ADP-ribose). In addition, positively regulates DTXL3 protein levels. In association with DTX3L and in presence of E1 and E2 enzymes, mediates NAD(+)-dependent mono-ADP-ribosylation of ubiquitin which prevents ubiquitin conjugation to substrates such as histones. During DNA repair, PARP1 recruits PARP9/BAL1-DTX3L complex to DNA damage sites via PARP9 binding to ribosylated PARP1. Subsequent PARP1-dependent PARP9/BAL1-DTX3L-mediated ubiquitination promotes the rapid and specific recruitment of 53BP1/TP53BP1, UIMC1/RAP80, and BRCA1 to DNA damage sites. In response to DNA damage, PARP9-DTX3L complex is required for efficient non-homologous end joining (NHEJ) but the complex function is restrained by PARP9 activity. Dispensable for B-cell receptor (BCR) assembly through V(D)J recombination and class switch recombination (CSR). In macrophages, positively regulates pro-inflammatory cytokines production in response to IFNG stimulation by suppressing PARP14-mediated STAT1 ADP-ribosylation and thus promoting STAT1 phosphorylation. Also suppresses PARP14-mediated STAT6 ADP-ribosylation. The sequence is that of Protein mono-ADP-ribosyltransferase PARP9 (Parp9) from Mus musculus (Mouse).